A 121-amino-acid polypeptide reads, in one-letter code: Large ribosomal subunit protein uL18 (121 aa).

The protein belongs to the universal ribosomal protein uL18 family. As to quaternary structure, part of the 50S ribosomal subunit; part of the 5S rRNA/L5/L18/L25 subcomplex. Contacts the 5S and 23S rRNAs.

Functionally, this is one of the proteins that bind and probably mediate the attachment of the 5S RNA into the large ribosomal subunit, where it forms part of the central protuberance. This Bordetella avium (strain 197N) protein is Large ribosomal subunit protein uL18.